The sequence spans 416 residues: 3-oxoacyl-[acyl-carrier-protein] synthase 1 (416 aa).

The 405-residue stretch at 11–415 (FPSVVVTAVT…GHNVALAFGR (405 aa)) folds into the Ketosynthase family 3 (KS3) domain. Active-site for beta-ketoacyl synthase activity residues include cysteine 171, histidine 311, and histidine 345. Histidine 311 and histidine 345 together coordinate substrate.

This sequence belongs to the thiolase-like superfamily. Beta-ketoacyl-ACP synthases family.

It localises to the cytoplasm. It catalyses the reaction an ultra-long-chain mono-unsaturated fatty acyl-[ACP] + malonyl-[ACP] + H(+) = a 3-oxo-ultra-long-chain mono-unsaturated fatty acyl-[ACP] + holo-[ACP] + CO2. The protein operates within lipid metabolism; mycolic acid biosynthesis. Its function is as follows. Part of the mycobacterial fatty acid elongation system FAS-II, which is involved in mycolic acid biosynthesis. Catalyzes the elongation of long chain acyl-ACP substrates by the addition of two carbons from malonyl-ACP to an acyl acceptor. Involved in the initial extension of the mycolate chain and forms monounsaturated fatty acids that averaged 40 carbons in length. The polypeptide is 3-oxoacyl-[acyl-carrier-protein] synthase 1 (kasA) (Mycobacterium leprae (strain TN)).